We begin with the raw amino-acid sequence, 187 residues long: Transmembrane protein 212 (187 aa).

The next 5 membrane-spanning stretches (helical) occupy residues 11–31 (TLVT…FPVF), 42–62 (VWIA…SLVL), 76–96 (AVFT…TVAL), 106–126 (FYSF…TFPF), and 148–168 (LQVL…AVFI).

It is found in the membrane. This chain is Transmembrane protein 212 (Tmem212), found in Mus musculus (Mouse).